We begin with the raw amino-acid sequence, 397 residues long: Bifunctional enzyme IspD/IspF (397 aa).

The interval 1–233 (MCAKKYKIAA…KLLFEEPKFR (233 aa)) is 2-C-methyl-D-erythritol 4-phosphate cytidylyltransferase. Residues 233-397 (RVGAGYDIHK…VLLHTNFYWK (165 aa)) form a 2-C-methyl-D-erythritol 2,4-cyclodiphosphate synthase region. 2 residues coordinate a divalent metal cation: Asp-239 and His-241. Residues 239–241 (DIH) and 270–271 (HS) each bind 4-CDP-2-C-methyl-D-erythritol 2-phosphate. His-278 is an a divalent metal cation binding site. 4-CDP-2-C-methyl-D-erythritol 2-phosphate is bound by residues 292–294 (DIG), 368–371 (TTAE), Tyr-375, and Arg-378.

It in the N-terminal section; belongs to the IspD/TarI cytidylyltransferase family. IspD subfamily. In the C-terminal section; belongs to the IspF family. Requires a divalent metal cation as cofactor.

It catalyses the reaction 2-C-methyl-D-erythritol 4-phosphate + CTP + H(+) = 4-CDP-2-C-methyl-D-erythritol + diphosphate. It carries out the reaction 4-CDP-2-C-methyl-D-erythritol 2-phosphate = 2-C-methyl-D-erythritol 2,4-cyclic diphosphate + CMP. It participates in isoprenoid biosynthesis; isopentenyl diphosphate biosynthesis via DXP pathway; isopentenyl diphosphate from 1-deoxy-D-xylulose 5-phosphate: step 2/6. The protein operates within isoprenoid biosynthesis; isopentenyl diphosphate biosynthesis via DXP pathway; isopentenyl diphosphate from 1-deoxy-D-xylulose 5-phosphate: step 4/6. In terms of biological role, bifunctional enzyme that catalyzes the formation of 4-diphosphocytidyl-2-C-methyl-D-erythritol from CTP and 2-C-methyl-D-erythritol 4-phosphate (MEP) (IspD), and catalyzes the conversion of 4-diphosphocytidyl-2-C-methyl-D-erythritol 2-phosphate (CDP-ME2P) to 2-C-methyl-D-erythritol 2,4-cyclodiphosphate (ME-CPP) with a corresponding release of cytidine 5-monophosphate (CMP) (IspF). The sequence is that of Bifunctional enzyme IspD/IspF from Wolbachia pipientis wMel.